Reading from the N-terminus, the 254-residue chain is 21S rRNA pseudouridine(2819) synthase (254 aa).

D71 is an active-site residue.

The protein belongs to the pseudouridine synthase RluA family.

Its subcellular location is the mitochondrion. The enzyme catalyses uridine(2819) in 21S rRNA = pseudouridine(2819) in 21S rRNA. Its function is as follows. Pseudouridylate synthase responsible for the pseudouridine-2819 formation in mitochondrial 21S rRNA. May modulate the efficiency or the fidelity of the mitochondrial translation machinery. The chain is 21S rRNA pseudouridine(2819) synthase (PUS5) from Saccharomyces cerevisiae (strain ATCC 204508 / S288c) (Baker's yeast).